A 142-amino-acid polypeptide reads, in one-letter code: FAD synthase (142 aa).

ATP-binding positions include 9–10 (VF), 14–17 (HLGH), aspartate 93, and tyrosine 120.

The protein belongs to the archaeal FAD synthase family. Homodimer. A divalent metal cation serves as cofactor.

It catalyses the reaction FMN + ATP + H(+) = FAD + diphosphate. It functions in the pathway cofactor biosynthesis; FAD biosynthesis; FAD from FMN: step 1/1. Its function is as follows. Catalyzes the transfer of the AMP portion of ATP to flavin mononucleotide (FMN) to produce flavin adenine dinucleotide (FAD) coenzyme. The polypeptide is FAD synthase (ribL) (Thermoplasma volcanium (strain ATCC 51530 / DSM 4299 / JCM 9571 / NBRC 15438 / GSS1)).